Consider the following 490-residue polypeptide: Katanin p60 ATPase-containing subunit A-like 1 (490 aa).

Methionine 1 is subject to N-acetylmethionine. The disordered stretch occupies residues 96-182; it reads PAVWPPPVPA…ASDGEIPKFD (87 aa). Residues 116–127 are compositionally biased toward basic and acidic residues; the sequence is PNREVRPLRKEM. Over residues 128–139 the composition is skewed to low complexity; sequence AGVGARGPVGRA. The segment covering 143–169 has biased composition (basic and acidic residues); sequence SKSEKPSASRDKDCRARGRDDKGRKNM. A Phosphoserine modification is found at serine 174. 248-255 provides a ligand contact to ATP; it reads GPPGTGKT.

The protein belongs to the AAA ATPase family. Katanin p60 subunit A1 subfamily. A-like 1 sub-subfamily. As to quaternary structure, interacts with KATNB1 and KATNBL1.

The protein resides in the cytoplasm. Its subcellular location is the cytoskeleton. It localises to the spindle pole. It is found in the spindle. It catalyses the reaction n ATP + n H2O + a microtubule = n ADP + n phosphate + (n+1) alpha/beta tubulin heterodimers.. In terms of biological role, regulates microtubule dynamics in Sertoli cells, a process that is essential for spermiogenesis and male fertility. Severs microtubules in an ATP-dependent manner, promoting rapid reorganization of cellular microtubule arrays. Has microtubule-severing activity in vitro. This Oryctolagus cuniculus (Rabbit) protein is Katanin p60 ATPase-containing subunit A-like 1.